A 283-amino-acid polypeptide reads, in one-letter code: Homeobox protein six1a (283 aa).

The homeobox DNA-binding region spans 124–183; that stretch reads GEETSYCFKEKSRSVLREWYTHNPYPSPREKRELAEATGLTTTQVSNWFKNRRQRDRAAE. The disordered stretch occupies residues 168–264; it reads VSNWFKNRRQ…PLHGMQGHPH (97 aa). Residues 179 to 190 show a composition bias toward basic and acidic residues; that stretch reads DRAAEAKERENG. A compositionally biased stretch (low complexity) spans 237–248; that stretch reads MNNPAAPAYPMP.

This sequence belongs to the SIX/Sine oculis homeobox family.

The protein resides in the nucleus. The protein localises to the cytoplasm. Functionally, transcription factor that is involved in the regulation of cell proliferation, apoptosis and embryonic development. Depending on context, functions as a transcriptional repressor or activator. Plays an important role in the development of the inner ear, where it promotes hair cell proliferation and inhibits proliferation of neural progenitor cells. Required for normal myogenesis. Plays a role in the development of fast muscle fibers throughout the body, as well as the development of craniofacial muscles. The chain is Homeobox protein six1a (six1a) from Danio rerio (Zebrafish).